The following is a 214-amino-acid chain: LOB domain-containing protein 7 (214 aa).

One can recognise an LOB domain in the interval 12–113; the sequence is TACAACKHQR…TELNLTRQQI (102 aa).

The protein belongs to the LOB domain-containing protein family.

The polypeptide is LOB domain-containing protein 7 (LBD7) (Arabidopsis thaliana (Mouse-ear cress)).